The following is a 154-amino-acid chain: Metallothiol transferase FosB (154 aa).

Positions 8-123 (GINHLLFSVS…DGHKFELHTG (116 aa)) constitute a VOC domain. Mg(2+) is bound by residues histidine 11, histidine 70, and glutamate 119. Glutamate 119 serves as the catalytic Proton donor/acceptor.

It belongs to the fosfomycin resistance protein family. FosB subfamily. Homodimer. Requires Mg(2+) as cofactor.

The protein resides in the cytoplasm. Its function is as follows. Metallothiol transferase which confers resistance to fosfomycin by catalyzing the addition of a thiol cofactor to fosfomycin. L-cysteine is probably the physiological thiol donor. The polypeptide is Metallothiol transferase FosB (Bacillus licheniformis (strain ATCC 14580 / DSM 13 / JCM 2505 / CCUG 7422 / NBRC 12200 / NCIMB 9375 / NCTC 10341 / NRRL NRS-1264 / Gibson 46)).